The primary structure comprises 134 residues: NAD(P)H-quinone oxidoreductase subunit 3 (134 aa).

The next 3 helical transmembrane spans lie at 20–40 (GYDA…LALV), 78–98 (MFAL…PWAV), and 103–123 (LGLL…VALA).

This sequence belongs to the complex I subunit 3 family. As to quaternary structure, NDH-1 can be composed of about 15 different subunits; different subcomplexes with different compositions have been identified which probably have different functions.

The protein localises to the cellular thylakoid membrane. The catalysed reaction is a plastoquinone + NADH + (n+1) H(+)(in) = a plastoquinol + NAD(+) + n H(+)(out). It catalyses the reaction a plastoquinone + NADPH + (n+1) H(+)(in) = a plastoquinol + NADP(+) + n H(+)(out). In terms of biological role, NDH-1 shuttles electrons from an unknown electron donor, via FMN and iron-sulfur (Fe-S) centers, to quinones in the respiratory and/or the photosynthetic chain. The immediate electron acceptor for the enzyme in this species is believed to be plastoquinone. Couples the redox reaction to proton translocation, and thus conserves the redox energy in a proton gradient. Cyanobacterial NDH-1 also plays a role in inorganic carbon-concentration. This chain is NAD(P)H-quinone oxidoreductase subunit 3, found in Prochlorococcus marinus (strain MIT 9303).